Consider the following 590-residue polypeptide: UvrABC system protein C (590 aa).

The 78-residue stretch at 15-92 folds into the GIY-YIG domain; it reads DLPGCYMMKD…IQKHKPYYNI (78 aa). The UVR domain maps to 197–232; that stretch reads SKIKKELEQKMETASENLEFERAAEIRDQIHYVEMT.

It belongs to the UvrC family. In terms of assembly, interacts with UvrB in an incision complex.

The protein localises to the cytoplasm. The UvrABC repair system catalyzes the recognition and processing of DNA lesions. UvrC both incises the 5' and 3' sides of the lesion. The N-terminal half is responsible for the 3' incision and the C-terminal half is responsible for the 5' incision. The sequence is that of UvrABC system protein C from Ligilactobacillus salivarius (strain UCC118) (Lactobacillus salivarius).